The sequence spans 486 residues: Bifunctional protein GlmU (486 aa).

The interval 1–236 (MTDQNLAIVV…SWLVDGINDR (236 aa)) is pyrophosphorylase. UDP-N-acetyl-alpha-D-glucosamine contacts are provided by residues 11-14 (LAAG), Lys-25, Gln-78, and 83-84 (GT). Asp-109 is a Mg(2+) binding site. Residues Gly-146, Glu-161, Asn-176, and Asn-234 each coordinate UDP-N-acetyl-alpha-D-glucosamine. Asn-234 contacts Mg(2+). The tract at residues 237-257 (AQLSEAAAKLNALTVRAWQLA) is linker. The tract at residues 258 to 486 (GVTVQDPATT…ASNAAEESGE (229 aa)) is N-acetyltransferase. Arg-339 and Lys-357 together coordinate UDP-N-acetyl-alpha-D-glucosamine. Catalysis depends on His-369, which acts as the Proton acceptor. Residues Tyr-372 and Asn-383 each coordinate UDP-N-acetyl-alpha-D-glucosamine. Acetyl-CoA is bound by residues Ala-386, 392-393 (NY), and Ala-429. The interval 459 to 486 (RRPGTDAARAAQRNGAAEASNAAEESGE) is disordered. Over residues 465–486 (AARAAQRNGAAEASNAAEESGE) the composition is skewed to low complexity.

It in the N-terminal section; belongs to the N-acetylglucosamine-1-phosphate uridyltransferase family. In the C-terminal section; belongs to the transferase hexapeptide repeat family. Homotrimer. Mg(2+) serves as cofactor.

The protein resides in the cytoplasm. It catalyses the reaction alpha-D-glucosamine 1-phosphate + acetyl-CoA = N-acetyl-alpha-D-glucosamine 1-phosphate + CoA + H(+). The enzyme catalyses N-acetyl-alpha-D-glucosamine 1-phosphate + UTP + H(+) = UDP-N-acetyl-alpha-D-glucosamine + diphosphate. It participates in nucleotide-sugar biosynthesis; UDP-N-acetyl-alpha-D-glucosamine biosynthesis; N-acetyl-alpha-D-glucosamine 1-phosphate from alpha-D-glucosamine 6-phosphate (route II): step 2/2. It functions in the pathway nucleotide-sugar biosynthesis; UDP-N-acetyl-alpha-D-glucosamine biosynthesis; UDP-N-acetyl-alpha-D-glucosamine from N-acetyl-alpha-D-glucosamine 1-phosphate: step 1/1. The protein operates within bacterial outer membrane biogenesis; LPS lipid A biosynthesis. Its function is as follows. Catalyzes the last two sequential reactions in the de novo biosynthetic pathway for UDP-N-acetylglucosamine (UDP-GlcNAc). The C-terminal domain catalyzes the transfer of acetyl group from acetyl coenzyme A to glucosamine-1-phosphate (GlcN-1-P) to produce N-acetylglucosamine-1-phosphate (GlcNAc-1-P), which is converted into UDP-GlcNAc by the transfer of uridine 5-monophosphate (from uridine 5-triphosphate), a reaction catalyzed by the N-terminal domain. The polypeptide is Bifunctional protein GlmU (Leifsonia xyli subsp. xyli (strain CTCB07)).